Reading from the N-terminus, the 130-residue chain is Small ribosomal subunit protein uS8 (130 aa).

This sequence belongs to the universal ribosomal protein uS8 family.

In Strongylocentrotus purpuratus (Purple sea urchin), this protein is Small ribosomal subunit protein uS8 (RPS15A).